The following is a 233-amino-acid chain: 3-dehydroquinate dehydratase (233 aa).

3-dehydroquinate contacts are provided by residues 34 to 36 and R64; that span reads ELR. The active-site Proton donor/acceptor is the H118. K145 acts as the Schiff-base intermediate with substrate in catalysis. 3-dehydroquinate is bound by residues R185, S205, and Q209.

This sequence belongs to the type-I 3-dehydroquinase family. In terms of assembly, homodimer.

The catalysed reaction is 3-dehydroquinate = 3-dehydroshikimate + H2O. It functions in the pathway metabolic intermediate biosynthesis; chorismate biosynthesis; chorismate from D-erythrose 4-phosphate and phosphoenolpyruvate: step 3/7. In terms of biological role, involved in the third step of the chorismate pathway, which leads to the biosynthesis of aromatic amino acids. Catalyzes the cis-dehydration of 3-dehydroquinate (DHQ) and introduces the first double bond of the aromatic ring to yield 3-dehydroshikimate. The protein is 3-dehydroquinate dehydratase of Coxiella burnetii (strain CbuK_Q154) (Coxiella burnetii (strain Q154)).